A 249-amino-acid chain; its full sequence is Very-long-chain (3R)-3-hydroxyacyl-CoA dehydratase 1 (249 aa).

A disordered region spans residues 1–22 (MASSEEDGTNGGASEAGEEKEA). Residues 1-36 (MASSEEDGTNGGASEAGEEKEAPGRRRRLGLLATVW) are Cytoplasmic-facing. A helical transmembrane segment spans residues 37–56 (LTFYNIAMTAGWLVLAIAMV). Residues 57–75 (RFYMEKGTHKGLYKSIQKT) lie on the Lumenal side of the membrane. Residues 76–92 (LKFFQTFALLEIVHCLI) traverse the membrane as a helical segment. Over 93 to 102 (GIVPTSVIVA) the chain is Cytoplasmic. The helical transmembrane segment at 103–120 (GVQVSSRIFMVWLITHSI) threads the bilayer. The Lumenal segment spans residues 121-126 (KPIQNE). The helical transmembrane segment at 127-141 (ESVVLFLVAWTVTEI) threads the bilayer. Over 142–164 (TRYSFYTFSLLDHLPYFIKWARY) the chain is Cytoplasmic. The helical transmembrane segment at 165 to 182 (NFFIILYPVGVVGELLTI) threads the bilayer. Active-site residues include Tyr171 and Glu178. Residues 183–212 (YAALPYVKKTGMFSIRLPNKYNVSFDYYYF) are Lumenal-facing. A glycan (N-linked (GlcNAc...) asparagine) is linked at Asn204. Residues 213–230 (LLITMASYIPLFPQLYFH) form a helical membrane-spanning segment. The Cytoplasmic portion of the chain corresponds to 231–249 (MLRQRRKVLHGEVIVEKDD).

This sequence belongs to the very long-chain fatty acids dehydratase HACD family. In terms of assembly, may interact with enzymes of the ELO family (including ELOVL1); with those enzymes that mediate condensation, the first of the four steps of the reaction cycle responsible for fatty acids elongation, may be part of a larger fatty acids elongase complex. Interacts with TECR. In terms of tissue distribution, skeletal muscle.

The protein localises to the endoplasmic reticulum membrane. The catalysed reaction is a very-long-chain (3R)-3-hydroxyacyl-CoA = a very-long-chain (2E)-enoyl-CoA + H2O. It catalyses the reaction (3R)-hydroxyhexadecanoyl-CoA = (2E)-hexadecenoyl-CoA + H2O. It carries out the reaction (3R)-hydroxyoctadecanoyl-CoA = (2E)-octadecenoyl-CoA + H2O. The enzyme catalyses (3R)-hydroxyeicosanoyl-CoA = (2E)-eicosenoyl-CoA + H2O. The catalysed reaction is (3R)-hydroxydocosanoyl-CoA = (2E)-docosenoyl-CoA + H2O. It catalyses the reaction (3R)-hydroxytetracosanoyl-CoA = (2E)-tetracosenoyl-CoA + H2O. It carries out the reaction (3R)-hydroxyhexacosanoyl-CoA = (2E)-hexacosenoyl-CoA + H2O. Its pathway is lipid metabolism; fatty acid biosynthesis. Catalyzes the third of the four reactions of the long-chain fatty acids elongation cycle. This endoplasmic reticulum-bound enzymatic process, allows the addition of two carbons to the chain of long- and very long-chain fatty acids/VLCFAs per cycle. This enzyme catalyzes the dehydration of the 3-hydroxyacyl-CoA intermediate into trans-2,3-enoyl-CoA, within each cycle of fatty acid elongation. Thereby, it participates in the production of VLCFAs of different chain lengths that are involved in multiple biological processes as precursors of membrane lipids and lipid mediators. The protein is Very-long-chain (3R)-3-hydroxyacyl-CoA dehydratase 1 (HACD1) of Canis lupus familiaris (Dog).